We begin with the raw amino-acid sequence, 110 residues long: Thiosulfate sulfurtransferase GlpE (110 aa).

The 89-residue stretch at 17-105 folds into the Rhodanese domain; the sequence is RENGAQVVDI…WRSVYPADTS (89 aa). Cys65 functions as the Cysteine persulfide intermediate in the catalytic mechanism.

It belongs to the GlpE family.

The protein resides in the cytoplasm. The enzyme catalyses thiosulfate + hydrogen cyanide = thiocyanate + sulfite + 2 H(+). It carries out the reaction thiosulfate + [thioredoxin]-dithiol = [thioredoxin]-disulfide + hydrogen sulfide + sulfite + 2 H(+). Functionally, transferase that catalyzes the transfer of sulfur from thiosulfate to thiophilic acceptors such as cyanide or dithiols. May function in a CysM-independent thiosulfate assimilation pathway by catalyzing the conversion of thiosulfate to sulfite, which can then be used for L-cysteine biosynthesis. The sequence is that of Thiosulfate sulfurtransferase GlpE from Pseudomonas aeruginosa (strain ATCC 15692 / DSM 22644 / CIP 104116 / JCM 14847 / LMG 12228 / 1C / PRS 101 / PAO1).